Consider the following 226-residue polypeptide: Imidazoleglycerol-phosphate dehydratase (226 aa).

Residues 23-55 (LTGGPIERPQPSLFASEKGANTAGPDDASQTTA) are disordered.

Belongs to the imidazoleglycerol-phosphate dehydratase family.

The enzyme catalyses D-erythro-1-(imidazol-4-yl)glycerol 3-phosphate = 3-(imidazol-4-yl)-2-oxopropyl phosphate + H2O. The protein operates within amino-acid biosynthesis; L-histidine biosynthesis; L-histidine from 5-phospho-alpha-D-ribose 1-diphosphate: step 6/9. This chain is Imidazoleglycerol-phosphate dehydratase (HIS3), found in Maudiozyma humilis (Sour dough yeast).